A 358-amino-acid polypeptide reads, in one-letter code: Peptide chain release factor 1 (358 aa).

Gln235 is subject to N5-methylglutamine.

It belongs to the prokaryotic/mitochondrial release factor family. Methylated by PrmC. Methylation increases the termination efficiency of RF1.

The protein resides in the cytoplasm. Peptide chain release factor 1 directs the termination of translation in response to the peptide chain termination codons UAG and UAA. The protein is Peptide chain release factor 1 of Nitrosospira multiformis (strain ATCC 25196 / NCIMB 11849 / C 71).